The following is a 64-amino-acid chain: Large ribosomal subunit protein bL35 (64 aa).

The segment covering 1–45 (MPKMKTHKGAAKRFKKTGKGKIKRRKAFKSHILTKKTPKRKRNLR) has biased composition (basic residues). The tract at residues 1 to 64 (MPKMKTHKGA…EEKRIKRLLP (64 aa)) is disordered.

Belongs to the bacterial ribosomal protein bL35 family.

This chain is Large ribosomal subunit protein bL35, found in Natranaerobius thermophilus (strain ATCC BAA-1301 / DSM 18059 / JW/NM-WN-LF).